Reading from the N-terminus, the 126-residue chain is Large ribosomal subunit protein bL12 (126 aa).

This sequence belongs to the bacterial ribosomal protein bL12 family. Homodimer. Part of the ribosomal stalk of the 50S ribosomal subunit. Forms a multimeric L10(L12)X complex, where L10 forms an elongated spine to which 2 to 4 L12 dimers bind in a sequential fashion. Binds GTP-bound translation factors.

Forms part of the ribosomal stalk which helps the ribosome interact with GTP-bound translation factors. Is thus essential for accurate translation. In Bordetella avium (strain 197N), this protein is Large ribosomal subunit protein bL12.